Consider the following 563-residue polypeptide: MESFALHSLSTTATSTLLSHHHHHHPSRLSLLRRTSSRSPPSTISLRSLSVQPLSFPLLKPIPRFSTRIAAAPQDNAPPPPPPSPSPSPSPQGAKLIPLILSISVGLILRFAVPVPEGVTPQGWQLLSIFLSTIAGLVLSPLPVGAWAFIGLTASIVTKTLSFSAAFSAFTSEVIWLIVISFFFARGFVKTGLGDRIATYFVKWLGKSTLGLSYGLTLSEALIAPAMPSTTARAGGIFLPIIKSLSLSAGSKPNDSSSRKLGSYLIQSQFQCAGNSSALFLTAAAQNLLCLKLAEELGVVISNPWVSWFKAASLPAIISLLCTPLILYKLYPPETKDTPEAPGIAATKLKQMGPVTKNEWIMVGTMLLAVTLWICGETLGIPSVVAAMIGLSILLVLGVLNWDDCLSEKSAWDTLAWFAVLVGMAGQLTNLGVVTWMSDCVAKVLQSLSLSWPAAFGLLQAAYFFIHYLFASQTGHVGALFSAFLAMHIAAGVPGILAALALAYNTNLFGALTHYSSGQAAVYYGAGYVDLPDVFKIGFVMATINAIIWGVVGTFWWKFLGLY.

A chloroplast-targeting transit peptide spans 1–68 (MESFALHSLS…LKPIPRFSTR (68 aa)). Disordered stretches follow at residues 16-45 (TLLS…STIS) and 71-92 (AAPQ…PSPQ). Positions 28–45 (RLSLLRRTSSRSPPSTIS) are enriched in low complexity. Over residues 76-90 (NAPPPPPPSPSPSPS) the composition is skewed to pro residues. 12 helical membrane passes run 96 to 116 (LIPL…VPVP), 134 to 154 (IAGL…GLTA), 165 to 185 (AAFS…FFFA), 234 to 254 (AGGI…SKPN), 261 to 281 (LGSY…ALFL), 308 to 328 (WFKA…LILY), 358 to 378 (NEWI…CGET), 379 to 399 (LGIP…VLGV), 414 to 434 (TLAW…LGVV), 450 to 470 (LSWP…HYLF), 483 to 503 (AFLA…LALA), and 537 to 557 (IGFV…TFWW).

Belongs to the SLC13A/DASS transporter (TC 2.A.47) family. DIT1 subfamily. In terms of tissue distribution, expressed in roots, rosette and cauline leaves, stems, flowers and siliques.

The protein localises to the plastid. It is found in the chloroplast inner membrane. Its function is as follows. Glutamate/malate translocator involved with DIT1 in primary ammonia assimilation and in the re-assimilation of ammonia generated by the photorespiratory pathway. Exports the end product of ammonia assimilation, glutamate, from plastids to the cytosol. The precursor for ammonia assimilation, 2-oxoglutarate, is imported from the cytosol by DIT1. The polypeptide is Dicarboxylate transporter 2.1, chloroplastic (DIT2-1) (Arabidopsis thaliana (Mouse-ear cress)).